Reading from the N-terminus, the 319-residue chain is MFARQTFRYAQPLKQSFRKYSTEAPKGKSLAPVYLTVGLAGLGVGLYRYNSATAEAPAERAKVFTGGDQGWVDLKLSEIEVLNHNTKRFRFEFEDKEAVSGLNVASALLTKFKPEGGKAVLRPYTPVSDESQPGFLDLVVKVYPNGPMSEHLHSMNVDQRLEFKGPLPKYPWEANKHQHICLIAGGTGITPMYQLARHIFKNPEDKTKVTLVYGNVSEQDILLKKELEELENTYPQRFKAFYVLDNPPKEWTGGKGYISKELLKTVLPEPKEENIKIFVCGPPGLYKAISGNKVSPKDQGELTGILKELGYSQEQVFKF.

Residues 30–46 traverse the membrane as a helical segment; that stretch reads LAPVYLTVGLAGLGVGL. Residues 69-173 form the FAD-binding FR-type domain; sequence QGWVDLKLSE…KGPLPKYPWE (105 aa). 176–211 is an FAD binding site; that stretch reads KHQHICLIAGGTGITPMYQLARHIFKNPEDKTKVTL.

This sequence belongs to the flavoprotein pyridine nucleotide cytochrome reductase family. Requires FAD as cofactor.

The protein resides in the mitochondrion outer membrane. It catalyses the reaction 2 Fe(III)-[cytochrome b5] + NADH = 2 Fe(II)-[cytochrome b5] + NAD(+) + H(+). In terms of biological role, may mediate the reduction of outer membrane cytochrome b5. The sequence is that of NADH-cytochrome b5 reductase 2 (mcr1) from Aspergillus terreus (strain NIH 2624 / FGSC A1156).